Reading from the N-terminus, the 190-residue chain is Frizzled-6 (190 aa).

The FZ domain occupies 1 to 20 (FGFAWPEELECSRLVNCDET). The Extracellular portion of the chain corresponds to 1–89 (FGFAWPEELE…NYELDVAKSF (89 aa)). The chain crosses the membrane as a helical span at residues 90–110 (IGIVSIFCLCATLFTFLTFLI). Residues 111 to 121 (DVKRFRYPERP) lie on the Cytoplasmic side of the membrane. The helical transmembrane segment at 122 to 142 (IIYYSVCYSIVSLMYFIGFLL) threads the bilayer. The Extracellular portion of the chain corresponds to 143–169 (GNRTACNKADDKLEIGETVVLGSQNKA). N-linked (GlcNAc...) asparagine glycosylation is present at N144. The chain crosses the membrane as a helical span at residues 170–190 (CTVLFMVLYFFTMAGTIWWVI).

Belongs to the G-protein coupled receptor Fz/Smo family.

It localises to the membrane. The protein localises to the cell membrane. The protein resides in the cell surface. It is found in the apical cell membrane. Its subcellular location is the cytoplasmic vesicle membrane. Its function is as follows. Receptor for Wnt proteins. Most of frizzled receptors are coupled to the beta-catenin canonical signaling pathway, which leads to the activation of disheveled proteins, inhibition of GSK-3 kinase, nuclear accumulation of beta-catenin and activation of Wnt target genes. A second signaling pathway involving PKC and calcium fluxes has been seen for some family members, but it is not yet clear if it represents a distinct pathway or if it can be integrated in the canonical pathway, as PKC seems to be required for Wnt-mediated inactivation of GSK-3 kinase. Both pathways seem to involve interactions with G-proteins. Activation by Wnt5A stimulates PKC activity via a G-protein-dependent mechanism. Involved in transduction and intercellular transmission of polarity information during tissue morphogenesis and/or in differentiated tissues. Together with FZD3, may be involved in the neural tube closure and plays a role in the regulation of the establishment of planar cell polarity (PCP), particularly in the orientation of asymmetric bundles of stereocilia on the apical faces of a subset of auditory and vestibular sensory cells located in the inner ear. This is Frizzled-6 (FZD6) from Gallus gallus (Chicken).